We begin with the raw amino-acid sequence, 141 residues long: ATP synthase epsilon chain (141 aa).

It belongs to the ATPase epsilon chain family. As to quaternary structure, F-type ATPases have 2 components, CF(1) - the catalytic core - and CF(0) - the membrane proton channel. CF(1) has five subunits: alpha(3), beta(3), gamma(1), delta(1), epsilon(1). CF(0) has three main subunits: a, b and c.

Its subcellular location is the cell inner membrane. Produces ATP from ADP in the presence of a proton gradient across the membrane. The chain is ATP synthase epsilon chain from Paraburkholderia phytofirmans (strain DSM 17436 / LMG 22146 / PsJN) (Burkholderia phytofirmans).